The following is a 1320-amino-acid chain: CAP-Gly domain-containing linker protein 1 (1320 aa).

The disordered stretch occupies residues methionine 1–glutamate 53. The span at threonine 21–lysine 35 shows a compositional bias: low complexity. Position 48 is a phosphoserine (serine 48). Threonine 50 is subject to Phosphothreonine. A CAP-Gly 1 domain is found at glycine 78 to arginine 120. The important for tubulin binding stretch occupies residues glycine 97–glycine 101. Residue serine 146 is modified to Phosphoserine. A compositionally biased stretch (polar residues) spans valine 156–serine 171. The disordered stretch occupies residues valine 156–threonine 181. Position 181 is a phosphothreonine (threonine 181). Phosphoserine is present on residues serine 194, serine 196, serine 199, and serine 203. A CAP-Gly 2 domain is found at glycine 231–proline 273. Positions threonine 301–arginine 331 are enriched in low complexity. A disordered region spans residues threonine 301–threonine 338. Serine 309 carries the phosphoserine modification. A Phosphoserine; by PKA modification is found at serine 311. A phosphoserine mark is found at serine 314 and serine 347. The disordered stretch occupies residues serine 1089 to alanine 1109. Residues arginine 1096 to alanine 1109 are compositionally biased toward basic and acidic residues. Position 1116 is a phosphoserine (serine 1116). The segment at lysine 1178–serine 1201 is disordered. The segment covering glutamine 1180–valine 1190 has biased composition (polar residues). Serine 1246 carries the post-translational modification Phosphoserine. The CCHC-type zinc finger occupies proline 1299–aspartate 1316.

As to quaternary structure, interacts with MTOR; phosphorylates and regulates CLIP1. Interacts (via CAP-Gly domains) with tubulin and TUBA1B. Interacts with SLAIN2. Interacts with MAPRE1 and MAPRE3. Interacts (via zinc finger) with DCTN1. Binds preferentially to tyrosinated microtubules, and only marginally to detyrosinated microtubules. Phosphorylated. Phosphorylation induces conformational changes by increasing the affinity of the N-terminus for C-terminus, resulting in inhibition of its function thus decreasing its binding to microtubules and DCTN1. Exhibits a folded, autoinhibited conformation when phosphorylated and an open conformation when dephosphorylated with increased binding affinity to microtubules and DCTN1. Phosphorylation regulates its recruitment to tyrosinated microtubules and the recruitment of vesicular cargo to microtubules in neurons. Phosphorylation by MTOR may positively regulate CLIP1 association with microtubules.

Its subcellular location is the cytoplasm. The protein localises to the cytoskeleton. It is found in the cytoplasmic vesicle membrane. It localises to the cell projection. The protein resides in the ruffle. In terms of biological role, binds to the plus end of microtubules and regulates the dynamics of the microtubule cytoskeleton. Promotes microtubule growth and microtubule bundling. Links cytoplasmic vesicles to microtubules and thereby plays an important role in intracellular vesicle trafficking. Plays a role macropinocytosis and endosome trafficking. The protein is CAP-Gly domain-containing linker protein 1 (Clip1) of Rattus norvegicus (Rat).